A 428-amino-acid polypeptide reads, in one-letter code: RUN domain-containing protein 3A (428 aa).

The 131-residue stretch at 52–182 (DDSSEEFINF…IDFSFCLKGE (131 aa)) folds into the RUN domain. The stretch at 237–314 (ESWRNKCRKM…ELQEQLTSLI (78 aa)) forms a coiled coil. Positions 349 to 375 (HRGSFPSPEPHISLTTGSQRTERKQNG) are disordered.

It belongs to the RUNDC3 family.

In Danio rerio (Zebrafish), this protein is RUN domain-containing protein 3A (rundc3a).